The primary structure comprises 512 residues: Probable ubiquitin carboxyl-terminal hydrolase 3 (512 aa).

Residues 64-109 form a disordered region; that stretch reads TSKTKESEKSPKSWSAIAKKHVQGDSPVKKSHSVPVPSDRSEKKSF. The USP domain occupies 133 to 511; that stretch reads RGFINTGNIC…VAYLLFYTRR (379 aa). Catalysis depends on C142, which acts as the Nucleophile. The active-site Proton acceptor is the H453.

Belongs to the peptidase C19 family.

The enzyme catalyses Thiol-dependent hydrolysis of ester, thioester, amide, peptide and isopeptide bonds formed by the C-terminal Gly of ubiquitin (a 76-residue protein attached to proteins as an intracellular targeting signal).. The protein is Probable ubiquitin carboxyl-terminal hydrolase 3 (ubp3) of Schizosaccharomyces pombe (strain 972 / ATCC 24843) (Fission yeast).